Consider the following 325-residue polypeptide: Serpentine receptor class gamma-16 (325 aa).

Helical transmembrane passes span 25-45, 65-85, 87-107, 144-164, 187-207, 232-252, and 264-284; these read FCLY…ILLI, VVSL…MFIP, LCPL…MYYW, LAVT…WNLL, WASL…FTII, FVSL…LIFV, and LLFQ…IIML.

This sequence belongs to the nematode receptor-like protein srg family.

The protein localises to the membrane. This chain is Serpentine receptor class gamma-16 (srg-16), found in Caenorhabditis elegans.